Here is a 207-residue protein sequence, read N- to C-terminus: Large ribosomal subunit protein uL4 (207 aa).

This sequence belongs to the universal ribosomal protein uL4 family. Part of the 50S ribosomal subunit.

Its function is as follows. One of the primary rRNA binding proteins, this protein initially binds near the 5'-end of the 23S rRNA. It is important during the early stages of 50S assembly. It makes multiple contacts with different domains of the 23S rRNA in the assembled 50S subunit and ribosome. Forms part of the polypeptide exit tunnel. This chain is Large ribosomal subunit protein uL4, found in Erythrobacter litoralis (strain HTCC2594).